The following is a 115-amino-acid chain: Large ribosomal subunit protein bL31B (115 aa).

It belongs to the bacterial ribosomal protein bL31 family. Type B subfamily. Part of the 50S ribosomal subunit.

This Polynucleobacter necessarius subsp. necessarius (strain STIR1) protein is Large ribosomal subunit protein bL31B.